The chain runs to 394 residues: uncharacterized protein (394 aa).

Helical transmembrane passes span 10-30 (PALI…NYYA), 50-70 (FIVT…VPLG), 79-99 (IVSM…SQSL), 100-120 (AMMI…QILV), 138-158 (TIMS…GLLA), 166-186 (VFWV…RGLP), 218-238 (LLGC…AFLL), 243-263 (FNYS…GALG), 291-311 (WLAI…ILVL), 337-357 (LTAG…LISA), and 364-384 (GWAG…LVWW).

Belongs to the major facilitator superfamily.

The protein resides in the cell inner membrane. This is an uncharacterized protein from Escherichia coli (strain K12).